Reading from the N-terminus, the 309-residue chain is Serine/threonine-protein phosphatase 4 catalytic subunit (309 aa).

Residues Asp-52, His-54, Asp-80, and Asn-112 each contribute to the Mn(2+) site. The active-site Proton donor is the His-113. Residues His-162 and His-236 each contribute to the Mn(2+) site. Leu-309 carries the post-translational modification Leucine methyl ester.

The protein belongs to the PPP phosphatase family. PP-4 (PP-X) subfamily. Catalytic subunit of the histone H2A phosphatase complex (HTP-C) containing PPH3, PSY2 and PSY4. Mn(2+) is required as a cofactor.

It localises to the cytoplasm. The protein localises to the nucleus. The enzyme catalyses O-phospho-L-seryl-[protein] + H2O = L-seryl-[protein] + phosphate. It carries out the reaction O-phospho-L-threonyl-[protein] + H2O = L-threonyl-[protein] + phosphate. In terms of biological role, forms the histone H2A phosphatase complex in association with the regulatory subunits PSY2 and PSY4, which dephosphorylates H2AS128ph (gamma-H2A) that has been displaced from sites of DNA lesions in the double-stranded DNA break repair process. Dephosphorylation is necessary for efficient recovery from the DNA damage checkpoint. The protein is Serine/threonine-protein phosphatase 4 catalytic subunit (PPH3) of Candida glabrata (strain ATCC 2001 / BCRC 20586 / JCM 3761 / NBRC 0622 / NRRL Y-65 / CBS 138) (Yeast).